The primary structure comprises 287 residues: tRNA pseudouridine synthase B (287 aa).

Residue D38 is the Nucleophile of the active site.

Belongs to the pseudouridine synthase TruB family. Type 1 subfamily.

The enzyme catalyses uridine(55) in tRNA = pseudouridine(55) in tRNA. Responsible for synthesis of pseudouridine from uracil-55 in the psi GC loop of transfer RNAs. This chain is tRNA pseudouridine synthase B, found in Mycoplasma mobile (strain ATCC 43663 / 163K / NCTC 11711) (Mesomycoplasma mobile).